The sequence spans 320 residues: Acetyl-coenzyme A carboxylase carboxyl transferase subunit alpha (320 aa).

A CoA carboxyltransferase C-terminal domain is found at alanine 39 to glutamate 293.

This sequence belongs to the AccA family. As to quaternary structure, acetyl-CoA carboxylase is a heterohexamer composed of biotin carboxyl carrier protein (AccB), biotin carboxylase (AccC) and two subunits each of ACCase subunit alpha (AccA) and ACCase subunit beta (AccD).

The protein localises to the cytoplasm. It catalyses the reaction N(6)-carboxybiotinyl-L-lysyl-[protein] + acetyl-CoA = N(6)-biotinyl-L-lysyl-[protein] + malonyl-CoA. The protein operates within lipid metabolism; malonyl-CoA biosynthesis; malonyl-CoA from acetyl-CoA: step 1/1. Its function is as follows. Component of the acetyl coenzyme A carboxylase (ACC) complex. First, biotin carboxylase catalyzes the carboxylation of biotin on its carrier protein (BCCP) and then the CO(2) group is transferred by the carboxyltransferase to acetyl-CoA to form malonyl-CoA. This chain is Acetyl-coenzyme A carboxylase carboxyl transferase subunit alpha, found in Ruegeria pomeroyi (strain ATCC 700808 / DSM 15171 / DSS-3) (Silicibacter pomeroyi).